Reading from the N-terminus, the 188-residue chain is Peptide deformylase (188 aa).

Positions 107 and 149 each coordinate Fe cation. Glu150 is an active-site residue. His153 contributes to the Fe cation binding site.

The protein belongs to the polypeptide deformylase family. Fe(2+) is required as a cofactor.

The enzyme catalyses N-terminal N-formyl-L-methionyl-[peptide] + H2O = N-terminal L-methionyl-[peptide] + formate. In terms of biological role, removes the formyl group from the N-terminal Met of newly synthesized proteins. Requires at least a dipeptide for an efficient rate of reaction. N-terminal L-methionine is a prerequisite for activity but the enzyme has broad specificity at other positions. This Thermosynechococcus vestitus (strain NIES-2133 / IAM M-273 / BP-1) protein is Peptide deformylase.